Consider the following 276-residue polypeptide: Shikimate dehydrogenase (NADP(+)) (276 aa).

Shikimate is bound by residues 15-17 and Thr62; that span reads SKS. Catalysis depends on Lys66, which acts as the Proton acceptor. Glu78 contributes to the NADP(+) binding site. 2 residues coordinate shikimate: Asn87 and Asp103. Residues 127–131, 150–155, and Met214 each bind NADP(+); these read GAGGV and NRTHIK. Shikimate is bound at residue Tyr216. Residue Gly239 participates in NADP(+) binding.

The protein belongs to the shikimate dehydrogenase family. Homodimer.

The enzyme catalyses shikimate + NADP(+) = 3-dehydroshikimate + NADPH + H(+). It participates in metabolic intermediate biosynthesis; chorismate biosynthesis; chorismate from D-erythrose 4-phosphate and phosphoenolpyruvate: step 4/7. Its function is as follows. Involved in the biosynthesis of the chorismate, which leads to the biosynthesis of aromatic amino acids. Catalyzes the reversible NADPH linked reduction of 3-dehydroshikimate (DHSA) to yield shikimate (SA). The polypeptide is Shikimate dehydrogenase (NADP(+)) (Haemophilus ducreyi (strain 35000HP / ATCC 700724)).